Here is a 66-residue protein sequence, read N- to C-terminus: DNA gyrase inhibitor YacG (66 aa).

Zn(2+)-binding residues include Cys-9, Cys-12, Cys-28, and Cys-32.

It belongs to the DNA gyrase inhibitor YacG family. As to quaternary structure, interacts with GyrB. Zn(2+) is required as a cofactor.

Inhibits all the catalytic activities of DNA gyrase by preventing its interaction with DNA. Acts by binding directly to the C-terminal domain of GyrB, which probably disrupts DNA binding by the gyrase. The polypeptide is DNA gyrase inhibitor YacG (Pseudomonas fluorescens (strain Pf0-1)).